The sequence spans 60 residues: UPF0434 protein YPA_0693 (60 aa).

Belongs to the UPF0434 family.

The polypeptide is UPF0434 protein YPA_0693 (Yersinia pestis bv. Antiqua (strain Antiqua)).